We begin with the raw amino-acid sequence, 138 residues long: MALLPDKEKLLRNFLRCANWEEKYLYIIELGQRLPELRDEDKSPQNSIQGCQSQVWIVMRQNAQGIIELQGDSDAAIVKGLIAVVFILYDQMTPQDIVNFDVRPWFEKMALTQHLTPSRSQGLEAMIRAIRAKAAALS.

Catalysis depends on C51, which acts as the Cysteine persulfide intermediate.

This sequence belongs to the SufE family. Homodimer. Interacts with SufS.

Its subcellular location is the cytoplasm. Its pathway is cofactor biosynthesis; iron-sulfur cluster biosynthesis. Participates in cysteine desulfuration mediated by SufS. Cysteine desulfuration mobilizes sulfur from L-cysteine to yield L-alanine and constitutes an essential step in sulfur metabolism for biosynthesis of a variety of sulfur-containing biomolecules. Functions as a sulfur acceptor for SufS, by mediating the direct transfer of the sulfur atom from the S-sulfanylcysteine of SufS, an intermediate product of cysteine desulfuration process. The protein is Cysteine desulfuration protein SufE of Escherichia coli O81 (strain ED1a).